A 102-amino-acid polypeptide reads, in one-letter code: NADH-quinone oxidoreductase subunit K (102 aa).

The next 3 helical transmembrane spans lie at I3–I23, I31–F51, and F66–F86.

This sequence belongs to the complex I subunit 4L family. In terms of assembly, NDH-1 is composed of 14 different subunits. Subunits NuoA, H, J, K, L, M, N constitute the membrane sector of the complex.

Its subcellular location is the cell inner membrane. It carries out the reaction a quinone + NADH + 5 H(+)(in) = a quinol + NAD(+) + 4 H(+)(out). In terms of biological role, NDH-1 shuttles electrons from NADH, via FMN and iron-sulfur (Fe-S) centers, to quinones in the respiratory chain. The immediate electron acceptor for the enzyme in this species is believed to be ubiquinone. Couples the redox reaction to proton translocation (for every two electrons transferred, four hydrogen ions are translocated across the cytoplasmic membrane), and thus conserves the redox energy in a proton gradient. The protein is NADH-quinone oxidoreductase subunit K of Rhodospirillum centenum (strain ATCC 51521 / SW).